Consider the following 182-residue polypeptide: Orotate phosphoribosyltransferase (182 aa).

5-phospho-alpha-D-ribose 1-diphosphate is bound by residues Arg-91, Lys-92, Lys-95, His-97, and 117-125 (EDVTTTGGS). Residues Thr-121 and Arg-149 each contribute to the orotate site.

The protein belongs to the purine/pyrimidine phosphoribosyltransferase family. PyrE subfamily. Homodimer. It depends on Mg(2+) as a cofactor.

The enzyme catalyses orotidine 5'-phosphate + diphosphate = orotate + 5-phospho-alpha-D-ribose 1-diphosphate. It participates in pyrimidine metabolism; UMP biosynthesis via de novo pathway; UMP from orotate: step 1/2. Functionally, catalyzes the transfer of a ribosyl phosphate group from 5-phosphoribose 1-diphosphate to orotate, leading to the formation of orotidine monophosphate (OMP). The chain is Orotate phosphoribosyltransferase from Pyrococcus abyssi (strain GE5 / Orsay).